Here is a 235-residue protein sequence, read N- to C-terminus: MRRFLLNVILVLAIVLFLRYVHYSLEPEPSNQPDTYSNFSSLAENESPADYDISYNEKKGSKVLIMSPHGGRIEGGVSELVRYFNNEYSTYLFEGLKSHDNQTLHITSTNFDEPLAKKKIKEHQYVVAFHGYKGENKNTLVGGTDRKRAKMIVRALERRGFSAELASSKSGLAGLNAENINNQGETGLSIQLEISREQREAFFDDFYYKNRKYTKNSEFYAYVSAIKGVLEKEYS.

Residues 5–24 (LLNVILVLAIVLFLRYVHYS) form a helical membrane-spanning segment.

The protein belongs to the UPF0714 family.

Its subcellular location is the cell membrane. The chain is UPF0714 protein YmaC (ymaC) from Bacillus subtilis (strain 168).